A 142-amino-acid chain; its full sequence is Large ribosomal subunit protein uL11 (142 aa).

The protein belongs to the universal ribosomal protein uL11 family. As to quaternary structure, part of the ribosomal stalk of the 50S ribosomal subunit. Interacts with L10 and the large rRNA to form the base of the stalk. L10 forms an elongated spine to which L12 dimers bind in a sequential fashion forming a multimeric L10(L12)X complex. One or more lysine residues are methylated.

In terms of biological role, forms part of the ribosomal stalk which helps the ribosome interact with GTP-bound translation factors. In Proteus vulgaris, this protein is Large ribosomal subunit protein uL11.